The chain runs to 190 residues: E3 ubiquitin-protein ligase RNF4 (190 aa).

Residues Met-1–Ala-16 form a required for ubiquitination activity region. Positions Met-1 to Ile-29 are disordered. The mediates interaction with TRPS1 stretch occupies residues Arg-4–Leu-61. 4 consecutive short sequence motifs (SUMO interaction motif) follow at residues Ile-36–Val-39, Ile-46–Leu-49, Val-57–Val-59, and Val-67–Val-70. Phosphoserine is present on residues Ser-94 and Ser-95. Zn(2+) is bound by residues Cys-132, Cys-135, Cys-154, His-156, Cys-159, Cys-162, Cys-173, and Cys-176. Residues Cys-132–Arg-177 form an RING-type zinc finger.

As to quaternary structure, homodimer (via RING-type zinc finger domain). Interacts with GSC2. Interacts with AR/the androgen receptor and TBP. Interacts with TCF20. Interacts with PATZ1. Interacts with TRPS1; negatively regulates TRPS1 transcriptional repressor activity. Interacts with PML (isoform PML-1, isoform PML-2, isoform PML-3, isoform PML-4, isoform PML-5 and isoform PML-6). Interacts with PRDM1/Blimp-1. Post-translationally, sumoylated; conjugated by one or two SUMO1 moieties. Autoubiquitinated. Widely expressed at low levels in many tissues; highly expressed in testis.

It is found in the cytoplasm. Its subcellular location is the nucleus. The protein localises to the PML body. It carries out the reaction S-ubiquitinyl-[E2 ubiquitin-conjugating enzyme]-L-cysteine + [acceptor protein]-L-lysine = [E2 ubiquitin-conjugating enzyme]-L-cysteine + N(6)-ubiquitinyl-[acceptor protein]-L-lysine.. The protein operates within protein modification; protein ubiquitination. Functionally, E3 ubiquitin-protein ligase which binds polysumoylated chains covalently attached to proteins and mediates 'Lys-6'-, 'Lys-11'-, 'Lys-48'- and 'Lys-63'-linked polyubiquitination of those substrates and their subsequent targeting to the proteasome for degradation. Regulates the degradation of several proteins including PML and the transcriptional activator PEA3. Involved in chromosome alignment and spindle assembly, it regulates the kinetochore CENPH-CENPI-CENPK complex by targeting polysumoylated CENPI to proteasomal degradation. Regulates the cellular responses to hypoxia and heat shock through degradation of respectively EPAS1 and PARP1. Alternatively, it may also bind DNA/nucleosomes and have a more direct role in the regulation of transcription for instance enhancing basal transcription and steroid receptor-mediated transcriptional activation. Catalyzes ubiquitination of sumoylated PARP1 in response to PARP1 trapping to chromatin, leading to PARP1 removal from chromatin by VCP/p97. This is E3 ubiquitin-protein ligase RNF4 from Homo sapiens (Human).